The following is a 215-amino-acid chain: Sec-independent protein translocase protein TatB (215 aa).

A helical transmembrane segment spans residues 1–21 (MLDIGWTELVVIAIVLIIVVG). 2 disordered regions span residues 95–119 (DLQK…EPVN) and 138–215 (AVSS…KGDA). The segment covering 145–157 (QMDRAADVPKASE) has biased composition (basic and acidic residues). Residues 203–215 (SKTRAASRKKGDA) show a composition bias toward basic residues.

This sequence belongs to the TatB family. In terms of assembly, the Tat system comprises two distinct complexes: a TatABC complex, containing multiple copies of TatA, TatB and TatC subunits, and a separate TatA complex, containing only TatA subunits. Substrates initially bind to the TatABC complex, which probably triggers association of the separate TatA complex to form the active translocon.

The protein localises to the cell inner membrane. Part of the twin-arginine translocation (Tat) system that transports large folded proteins containing a characteristic twin-arginine motif in their signal peptide across membranes. Together with TatC, TatB is part of a receptor directly interacting with Tat signal peptides. TatB may form an oligomeric binding site that transiently accommodates folded Tat precursor proteins before their translocation. This is Sec-independent protein translocase protein TatB from Rhizobium meliloti (strain 1021) (Ensifer meliloti).